The primary structure comprises 645 residues: L-aspartate oxidase, chloroplastic (645 aa).

Residues 1-70 (MAALMNGFGS…RMRHKVGSIR (70 aa)) constitute a chloroplast transit peptide. FAD is bound by residues 92-95 (SGVA), Lys-114, 121-128 (NTNYAQGG), and Asp-292. Residue Arg-368 is the Proton donor/acceptor of the active site. FAD-binding positions include Glu-453 and 469 to 470 (SL).

Belongs to the FAD-dependent oxidoreductase 2 family. NadB subfamily. FAD serves as cofactor.

The protein localises to the plastid. It localises to the chloroplast. It carries out the reaction L-aspartate + O2 = iminosuccinate + H2O2. It functions in the pathway cofactor biosynthesis; NAD(+) biosynthesis; iminoaspartate from L-aspartate (oxidase route): step 1/1. Catalyzes the oxidation of L-aspartate to iminoaspartate. This Oryza sativa subsp. japonica (Rice) protein is L-aspartate oxidase, chloroplastic.